A 372-amino-acid polypeptide reads, in one-letter code: 3-galactosyl-N-acetylglucosaminide 4-alpha-L-fucosyltransferase FUT3 (372 aa).

The Cytoplasmic segment spans residues 1-15 (MDPLGAAKTQWPWRR). Residues 16–34 (CLAALLFQLLVAVCFFSYL) form a helical; Signal-anchor for type II membrane protein membrane-spanning segment. Over 35-372 (RVSRDDATGS…MVRSIAAWFT (338 aa)) the chain is Lumenal. The disordered stretch occupies residues 40-68 (DATGSPRPGLMAVEPVTGAPGGSSRQDTT). N-linked (GlcNAc...) asparagine glycans are attached at residues N165 and N196.

Belongs to the glycosyltransferase 10 family. In terms of processing, glycosylated.

Its subcellular location is the golgi apparatus. It localises to the golgi stack membrane. It carries out the reaction a beta-D-galactosyl-(1-&gt;3)-N-acetyl-beta-D-glucosaminyl derivative + GDP-beta-L-fucose = a beta-D-galactosyl-(1-&gt;3)-[alpha-L-fucosyl-(1-&gt;4)]-N-acetyl-beta-D-glucosaminyl derivative + GDP + H(+). The enzyme catalyses an N-acetyl-alpha-neuraminyl-(2-&gt;3)-beta-D-galactosyl-(1-&gt;4)-N-acetyl-beta-D-glucosaminyl derivative + GDP-beta-L-fucose = an alpha-Neu5Ac-(2-&gt;3)-beta-D-Gal-(1-&gt;4)-[alpha-L-Fuc-(1-&gt;3)]-beta-D-GlcNAc derivative + GDP + H(+). The catalysed reaction is a beta-D-galactosyl-(1-&gt;4)-N-acetyl-beta-D-glucosaminyl derivative + GDP-beta-L-fucose = a beta-D-galactosyl-(1-&gt;4)-[alpha-L-fucosyl-(1-&gt;3)]-N-acetyl-beta-D-glucosaminyl derivative + GDP + H(+). It catalyses the reaction an alpha-Neu5Ac-(2-&gt;3)-beta-D-Gal-(1-&gt;4)-beta-D-GlcNAc-(1-&gt;3)-beta-D-Gal-(1-&gt;4)-[alpha-L-Fuc-(1-&gt;3)]-beta-D-GlcNAc derivative + GDP-beta-L-fucose = an alpha-Neu5Ac-(2-&gt;3)-beta-D-Gal-(1-&gt;4)-[alpha-L-Fuc-(1-&gt;3)]-beta-D-GlcNAc-(1-&gt;3)-beta-D-Gal-(1-&gt;4)-[alpha-L-Fuc-(1-&gt;3)]-beta-D-GlcNAc derivative + GDP + H(+). It carries out the reaction Lc4Cer + GDP-beta-L-fucose = a lactoside III(4)-a-Fuc-Lc4Cer + GDP + H(+). The enzyme catalyses a beta-D-Gal-(1-&gt;3)-beta-D-GlcNAc-(1-&gt;3)-beta-D-Gal-(1-&gt;4)-beta-D-Glc-(1&lt;-&gt;1')-Cer(d18:1(4E)) + GDP-beta-L-fucose = a III(4)-a-Fuc-Lc4Cer(d18:1(4E)) + GDP + H(+). The catalysed reaction is N-acetyl-alpha-neuraminosyl-(2-&gt;3)-beta-D-galactosyl-(1-&gt;3)-[N-acetyl-alpha-neuraminosyl-(2-&gt;6)]-N-acetyl-beta-D-glucosaminyl-(1-&gt;3)-beta-D-galactosyl-(1-&gt;4)-beta-D-glucosyl-(1&lt;-&gt;1')-N-acyl-sphing-4-enine + GDP-beta-L-fucose = N-acetyl-alpha-neuraminosyl-(2-&gt;3)-beta-D-galactosyl-(1-&gt;3)-alpha-L-fucosyl-(1-&gt;4)-[N-acetyl-alpha-neuraminosyl-(2-&gt;6)-N-acetyl-beta-D-glucosaminyl-(1-&gt;3)]-beta-D-galactosyl-(1-&gt;4)-beta-D-glucosyl-(1&lt;-&gt;1')-N-acyl-sphing-4-enine + GDP + H(+). It catalyses the reaction N-acetyl-alpha-neuraminosyl-(2-&gt;3)-beta-D-galactosyl-(1-&gt;3)-N-acetyl-beta-D-glucosaminyl-(1-&gt;3)-beta-D-galactosyl-(1-&gt;4)-beta-D-glucosyl-(1&lt;-&gt;1')-N-acyl-sphing-4-enine + GDP-beta-L-fucose = N-acetyl-alpha-neuraminosyl-(2-&gt;3)-beta-D-galactosyl-(1-&gt;3)-alpha-L-fucosyl-(1-&gt;4)-[N-acetyl-beta-D-glucosaminyl-(1-&gt;3)]-beta-D-galactosyl-(1-&gt;4)-beta-D-glucosyl-(1&lt;-&gt;1')-N-acyl-sphing-4-enine + GDP + H(+). It carries out the reaction beta-D-galactosyl-(1-&gt;3)-N-acetyl-D-glucosamine + GDP-beta-L-fucose = beta-D-galactosyl-(1-&gt;3)-[alpha-L-fucosyl-(1-&gt;4)]-N-acetyl-D-glucosamine + GDP + H(+). The enzyme catalyses alpha-L-Fuc-(1-&gt;2)-beta-D-Gal-(1-&gt;3)-D-GlcNAc + GDP-beta-L-fucose = alpha-L-Fuc-(1-&gt;2)-beta-D-Gal-(1-&gt;3)-[alpha-L-Fuc-(1-&gt;4)]-D-GlcNAc + GDP + H(+). The catalysed reaction is alpha-L-Fuc-(1-&gt;2)-beta-D-Gal-(1-&gt;4)-D-GlcNAc + GDP-beta-L-fucose = alpha-L-Fuc-(1-&gt;2)-beta-D-Gal-(1-&gt;4)-[alpha-L-Fuc-(1-&gt;3)]-D-GlcNAc + GDP + H(+). It catalyses the reaction beta-D-galactosyl-(1-&gt;4)-N-acetyl-D-glucosamine + GDP-beta-L-fucose = beta-D-galactosyl-(1-&gt;4)-[alpha-L-fucosyl-(1-&gt;3)]-N-acetyl-D-glucosamine + GDP + H(+). It carries out the reaction lactose + GDP-beta-L-fucose = beta-D-galactosyl-(1-&gt;4)-[alpha-L-fucosyl-(1-&gt;3)]-D-glucose + GDP + H(+). The enzyme catalyses an alpha-Neu5Ac-(2-&gt;3)-beta-D-Gal-(1-&gt;3)-D-GlcNAc derivative + GDP-beta-L-fucose = an alpha-Neu5Ac-(2-&gt;3)-beta-D-Gal-(1-&gt;3)-[alpha-L-Fuc-(1-&gt;4)]-beta-D-GlcNAc derivative + GDP + H(+). The protein operates within protein modification; protein glycosylation. In terms of biological role, catalyzes the transfer of L-fucose, from a guanosine diphosphate-beta-L-fucose, to both the subterminal N-acetyl glucosamine (GlcNAc) of type 1 chain (beta-D-Gal-(1-&gt;3)-beta-D-GlcNAc) glycolipids and oligosaccharides via an alpha(1,4) linkage, and the subterminal glucose (Glc) or GlcNAc of type 2 chain (beta-D-Gal-(1-&gt;4)-beta-D-GlcNAc) oligosaccharides via an alpha(1,3) linkage, independently of the presence of terminal alpha-L-fucosyl-(1,2) moieties on the terminal galactose of these acceptors and participates in the blood groups Lewis determination and expression of Lewis a (Le(a)), lewis b (Le(b)), Lewis x/SSEA-1 (Le(x)) and lewis y (Le(y)) antigens. Also catalyzes the transfer of L-fucose to subterminal GlcNAc of sialyl- and disialyl-lactotetraosylceramide to produce sialyl Lewis a (sLe(a)) and disialyl Lewis a via an alpha(1,4) linkage and therefore may regulate cell surface sialyl Lewis a expression and consequently regulates adhesive properties to E-selectin, cell proliferation and migration. Catalyzes the transfer of an L-fucose to 3'-sialyl-N-acetyllactosamine by an alpha(1,3) linkage, which allows the formation of sialyl-Lewis x structure and therefore may regulate the sialyl-Lewis x surface antigen expression and consequently adhesive properties to E-selectin. Prefers type 1 chain over type 2 acceptors. Type 1 tetrasaccharide is a better acceptor than type 1 disaccharide suggesting that a beta anomeric configuration of GlcNAc in the substrate is preferred. Lewis-positive (Le(+)) individuals have an active enzyme while Lewis-negative (Le(-)) individuals have an inactive enzyme. The sequence is that of 3-galactosyl-N-acetylglucosaminide 4-alpha-L-fucosyltransferase FUT3 from Pongo pygmaeus (Bornean orangutan).